A 206-amino-acid chain; its full sequence is Small ribosomal subunit protein uS4 (206 aa).

Positions Arg-94–Ile-157 constitute an S4 RNA-binding domain.

The protein belongs to the universal ribosomal protein uS4 family. Part of the 30S ribosomal subunit. Contacts protein S5. The interaction surface between S4 and S5 is involved in control of translational fidelity.

Its function is as follows. One of the primary rRNA binding proteins, it binds directly to 16S rRNA where it nucleates assembly of the body of the 30S subunit. In terms of biological role, with S5 and S12 plays an important role in translational accuracy. The protein is Small ribosomal subunit protein uS4 of Roseiflexus sp. (strain RS-1).